A 62-amino-acid chain; its full sequence is Toxin Tst2 (62 aa).

The 62-residue stretch at 1 to 62 folds into the LCN-type CS-alpha/beta domain; that stretch reads KEGYAMDHEG…KVWDYATNKC (62 aa). Cystine bridges form between Cys11–Cys62, Cys15–Cys38, Cys23–Cys43, and Cys27–Cys45. Cysteine amide is present on Cys62.

As to expression, expressed by the venom gland.

The protein resides in the secreted. Alpha toxins bind voltage-independently at site-3 of sodium channels (Nav) and inhibit the inactivation of the activated channels, thereby blocking neuronal transmission. Is toxic to mice. The chain is Toxin Tst2 from Tityus stigmurus (Brazilian scorpion).